Consider the following 85-residue polypeptide: Putative transmembrane protein ORF85 (85 aa).

2 consecutive transmembrane segments (helical) span residues 12–32 (FPPT…KFLS) and 44–64 (LGII…GAGI).

It localises to the host membrane. In Acidianus convivator (ABV), this protein is Putative transmembrane protein ORF85.